Reading from the N-terminus, the 456-residue chain is Solute carrier family 49 member 4 homolog (456 aa).

Residues 1-29 lie on the Cytoplasmic side of the membrane; sequence MGLEWSSPGERQPLLYPGGPRAPRVFGRR. The Di-leucine motif; mediates lysosomal localization signature appears at 14 to 15; sequence LL. A helical transmembrane segment spans residues 30 to 50; that stretch reads WLVLLLFSLLAFLQGLVWNSW. The Lumenal portion of the chain corresponds to 51 to 67; it reads GPIQNSARTAYNFSGLD. An N-linked (GlcNAc...) asparagine glycan is attached at asparagine 62. Residues 68–88 form a helical membrane-spanning segment; sequence IALLVLWGPIGFLPCFLFMWL. Residues 89-95 lie on the Cytoplasmic side of the membrane; sequence MDNRGLR. Residues 96 to 116 form a helical membrane-spanning segment; that stretch reads VTVLLTALLMVLGAGLRCVPV. Topologically, residues 117–131 are lumenal; sequence QDLAVRRKLIHGGQL. A helical membrane pass occupies residues 132 to 152; that stretch reads LNGFAGPTVMNAAPFLSTTWF. The Cytoplasmic portion of the chain corresponds to 153–162; it reads SPDERATATA. The helical transmembrane segment at 163–183 threads the bilayer; that stretch reads IASMLSYLGGACAFLVGPLVV. At 184–207 the chain is on the lumenal side; the sequence is PAPNSTSGLLLYSGSVGAIRDRIE. Asparagine 187 is a glycosylation site (N-linked (GlcNAc...) asparagine). The helical transmembrane segment at 208-228 threads the bilayer; that stretch reads AVMYAEFGIIFVVFAAILAYF. At 229–259 the chain is on the cytoplasmic side; the sequence is PSRPPVPPSVAAASRRLSYRTSILRLLSNVR. Residues 260–280 traverse the membrane as a helical segment; that stretch reads FLLIVLAYAIPLGFYAGWSGV. Residues 281–292 are Lumenal-facing; sequence LDLILTPVHVTQ. A helical transmembrane segment spans residues 293-313; that stretch reads VDAGWVGFWSIVGGCVVGIAV. The Cytoplasmic segment spans residues 314–326; that stretch reads GRFADSIRGVLKP. Residues 327–347 form a helical membrane-spanning segment; the sequence is ILLLLFSGAALSSTWFTLTFL. Over 348 to 362 the chain is Lumenal; it reads SNVTHLPLTTATLYT. N-linked (GlcNAc...) asparagine glycosylation is present at asparagine 349. The helical transmembrane segment at 363–383 threads the bilayer; that stretch reads SCILIGVFLSGTVPIFFEMFV. The Cytoplasmic portion of the chain corresponds to 384–392; that stretch reads ETVYPIPEG. The chain crosses the membrane as a helical span at residues 393–413; the sequence is ITCGVVTFLSNLFMGVLLLFL. Over 414–420 the chain is Lumenal; that stretch reads TLYQTNL. Asparagine 419 is a glycosylation site (N-linked (GlcNAc...) asparagine). The chain crosses the membrane as a helical span at residues 421–441; that stretch reads SWLNWCLTGSCFLSLLFIACF. The Cytoplasmic portion of the chain corresponds to 442–456; it reads RESYDRLYLDVFVSV.

The protein belongs to the major facilitator superfamily.

Its subcellular location is the lysosome membrane. It carries out the reaction pyridoxine(out) + n H(+)(out) = pyridoxine(in) + n H(+)(in). In terms of biological role, mediates H(+)-dependent pyridoxine transport. In Xenopus tropicalis (Western clawed frog), this protein is Solute carrier family 49 member 4 homolog (slc49a4).